The sequence spans 423 residues: Enolase (423 aa).

Glutamine 164 contributes to the (2R)-2-phosphoglycerate binding site. The active-site Proton donor is glutamate 206. Aspartate 243, glutamate 289, and aspartate 316 together coordinate Mg(2+). Positions 341, 370, 371, and 392 each coordinate (2R)-2-phosphoglycerate. Lysine 341 acts as the Proton acceptor in catalysis.

This sequence belongs to the enolase family. Mg(2+) serves as cofactor.

It is found in the cytoplasm. It localises to the secreted. The protein localises to the cell surface. The enzyme catalyses (2R)-2-phosphoglycerate = phosphoenolpyruvate + H2O. It functions in the pathway carbohydrate degradation; glycolysis; pyruvate from D-glyceraldehyde 3-phosphate: step 4/5. In terms of biological role, catalyzes the reversible conversion of 2-phosphoglycerate (2-PG) into phosphoenolpyruvate (PEP). It is essential for the degradation of carbohydrates via glycolysis. This Desulfotalea psychrophila (strain LSv54 / DSM 12343) protein is Enolase.